The sequence spans 538 residues: Potassium channel subfamily K member 10 (538 aa).

The Cytoplasmic portion of the chain corresponds to 1 to 71; sequence MFFLYTDFFL…GLQTVMKWKT (71 aa). A helical membrane pass occupies residues 72–92; it reads VVAIFVVVVVYLVTGGLVFRA. Residues Asn144, Asn147, and Asn148 are each glycosylated (N-linked (GlcNAc...) asparagine). Residues 154–180 constitute an intramembrane region (pore-forming); that stretch reads LGSAFFFAGTVITTIGYGNIAPSTEGG. Positions 167, 168, 169, and 170 each coordinate K(+). The interval 167-172 is selectivity filter 1; that stretch reads TIGYGN. Residues 182 to 202 form a helical membrane-spanning segment; that stretch reads IFCILYAIFGIPLFGFLLAGI. Residues 203-233 lie on the Cytoplasmic side of the membrane; it reads GDQLGTIFGKSIARVEKVFRKKQVSQTKIRV. A helical transmembrane segment spans residues 234–254; that stretch reads ISTILFILAGCIVFVTIPAVI. Residues 263–294 constitute an intramembrane region (pore-forming); the sequence is ALESIYFVVVTLTTVGFGDFVAGGNAGINYRE. K(+) contacts are provided by Thr276, Val277, Gly278, and Phe279. The segment at 276 to 281 is selectivity filter 2; it reads TVGFGD. The chain crosses the membrane as a helical span at residues 299–319; that stretch reads LVWFWILVGLAYFAAVLSMIG. Residues 320 to 538 lie on the Cytoplasmic side of the membrane; sequence DWLRVLSKKT…ENNSLLEDRN (219 aa). Positions 412–421 are enriched in polar residues; sequence SQESINNRPN. Disordered regions lie at residues 412–443 and 510–538; these read SQESINNRPNNLRLKGPEQLNKHGQGASEDNI and QHAELENGMIPTDTKDREPENNSLLEDRN. The span at 522–538 shows a compositional bias: basic and acidic residues; that stretch reads DTKDREPENNSLLEDRN.

Belongs to the two pore domain potassium channel (TC 1.A.1.8) family. Homodimer; disulfide-linked. Forms heterodimers with other 2-pore domain K(+) channel subunits, such as KCNK2, KCNK4 and KCNK18. In terms of tissue distribution, abundantly expressed in pancreas and kidney and to a lower level in brain, testis, colon, and small intestine. In brain, mainly expressed in cerebellum, occipital lobe, putamen, and thalamus. No expression is detected in amygdala and spinal cord. Strongly expressed in kidney (primarily in the proximal tubule) and pancreas. As to expression, abundantly expressed in brain.

The protein resides in the cell membrane. The catalysed reaction is K(+)(in) = K(+)(out). It carries out the reaction Rb(+)(in) = Rb(+)(out). The enzyme catalyses Cs(+)(in) = Cs(+)(out). With respect to regulation, activated by various stimuli including acidic pH, anesthetics chloroform, halothane and isoflurane, mechanical stretch, lipids such as arachidonic, docosahexaenoic and linoleic polyunsaturated fatty acids and lysophosphatidylcholine and lysophosphatidylinositol lysophospholipids. Inhibited by norfluoxetine, the active metabolite of antidepressant fluoxetine (Prozac). In terms of biological role, k(+) channel that conducts voltage-dependent outward rectifying currents upon membrane depolarization. Voltage sensing is coupled to K(+) electrochemical gradient in an 'ion flux gating' mode where outward but not inward ion flow opens the gate. Converts to voltage-independent 'leak' conductance mode upon stimulation by various stimuli including mechanical membrane stretch, acidic pH, heat and lipids. Homo- and heterodimerizes to form functional channels with distinct regulatory and gating properties. In trigeminal ganglia sensory neurons, the heterodimer of KCNK10/TREK-2 and KCNK18/TRESK inhibits neuronal firing and neurogenic inflammation by stabilizing the resting membrane potential at K(+) equilibrium potential as well as by regulating the threshold of action potentials and the spike frequency. Permeable to other monovalent ions such as Rb(+) and Cs(+). In Homo sapiens (Human), this protein is Potassium channel subfamily K member 10.